Reading from the N-terminus, the 82-residue chain is Beta-insect depressant toxin LqqIT2 (82 aa).

The signal sequence occupies residues 1-21 (MKLLLLLIVSASMLIESLVNA). In terms of domain architecture, LCN-type CS-alpha/beta spans 22–82 (DGYIRKRDGC…TWKSETNTCG (61 aa)). Cystine bridges form between Cys31/Cys81, Cys35/Cys56, Cys42/Cys63, and Cys46/Cys65.

Belongs to the long (4 C-C) scorpion toxin superfamily. Sodium channel inhibitor family. Beta subfamily. As to expression, expressed by the venom gland.

The protein resides in the secreted. Its function is as follows. Depressant insect beta-toxins cause a transient contraction paralysis followed by a slow flaccid paralysis. They bind voltage-independently at site-4 of sodium channels and shift the voltage of activation toward more negative potentials thereby affecting sodium channel activation and promoting spontaneous and repetitive firing. Aside from typical beta-toxin effects, this toxin also affects the inactivation process and ion selectivity of the insect voltage-gated sodium channel. This toxin is active only on insects. Is active on the insect voltage-gated sodium channel para. In vivo, when injected intraperitoneally, it exhibits analgesic activity, increasing hot plate and tail flick withdrawal latencies in a dose-dependent fashion. This phenomenon might be partly due to an inhibitory mechanism activated by noxious stimuli. This is Beta-insect depressant toxin LqqIT2 from Leiurus quinquestriatus quinquestriatus (Egyptian scorpion).